The following is a 316-amino-acid chain: Pentatricopeptide repeat-containing protein At1g19525 (316 aa).

6 PPR repeats span residues 9–43 (DILTATALVHMYSKSGNFERATEAFENLKSYGLRP), 44–78 (DEKIYEAMILGYVNAGKPKLGERLMKEMQAKELKA), 79–113 (SEEVYMALLRAYAQMGDANGAAGISSSMQYASDGP), 115–149 (SFEAYSLFVEAYGKAGQVDKAKSNFDEMRKLGHKP), 150–184 (DDKCIANLVRAYKGENSLDKALRLLLQLEKDGIEI), and 185–219 (GVITYTVLVDWMANLGLIEEAEQLLVKISQLGEAP).

It belongs to the PPR family. P subfamily.

The protein is Pentatricopeptide repeat-containing protein At1g19525 of Arabidopsis thaliana (Mouse-ear cress).